The sequence spans 170 residues: Nicotinamide-nucleotide adenylyltransferase (170 aa).

Belongs to the archaeal NMN adenylyltransferase family.

The protein resides in the cytoplasm. It catalyses the reaction beta-nicotinamide D-ribonucleotide + ATP + H(+) = diphosphate + NAD(+). The protein operates within cofactor biosynthesis; NAD(+) biosynthesis; NAD(+) from nicotinamide D-ribonucleotide: step 1/1. This chain is Nicotinamide-nucleotide adenylyltransferase, found in Methanothrix thermoacetophila (strain DSM 6194 / JCM 14653 / NBRC 101360 / PT) (Methanosaeta thermophila).